We begin with the raw amino-acid sequence, 675 residues long: MAFTAQQQLRAAELRQLLNRAAHAYYVLDAPEFEDAVYDRLYRELLDLEQQHPDLLSADSPTQRVGGPPAEGFSSVEHRIGMLSLDNAFNAEELQAWDARLGRQLEDNPERQREYVCELKIDGNALALSYADGVLVRAATRGDGSRGEEITANVRTIQAVPLRLQLKQPPAWVEVRGEAFIPDDTFEAINAERQQRGEALFANPRNACAGTLRQLDPKAVAARRLDFFAYTVHLPADEMGPKSQWDALQWLETAGFRVNPHRERTSGADGVVAFYDRWEEQRHQLPYATDGVVVKLDALERQQLAGFTQKAPRWAIALKYAAEEAPSRLLRLVAQVGRTGVVTPVAEFEAVPLAGTSVSRATLHNADRLEELDLHSGDTIVVRKAGEIIPEVLRVLPELRPEGAEQLELPSHCPECGSLLVRESGEAATRCVNSSCPAILRGALRHWVSRQAMDVDGLGGKLIEQLVDRGLVRSIADLYRLDAALLASLERMGEQSASNLIEALAASRQRPWHRLLYALGIHHIGSVNAKTLAAAFPSWEALQSASEEALNELYGIGPEISQSMQQWCSTEANQSLMAELAALELPLASDDSSAESAGAIGALTGQTLVLTGTLPNLSRLEAQALIEAAGGKVTGSVSKKTNYVVAGSEAGSKLQKAEKLGVAVIDEAELKALLS.

Residues 35–39 (DAVYD), 84–85 (SL), and E118 each bind NAD(+). Residue K120 is the N6-AMP-lysine intermediate of the active site. Residues R141, E178, K295, and K319 each coordinate NAD(+). Zn(2+) contacts are provided by C413, C416, C431, and C436. The BRCT domain maps to 598 to 675 (GAIGALTGQT…DEAELKALLS (78 aa)).

Belongs to the NAD-dependent DNA ligase family. LigA subfamily. Requires Mg(2+) as cofactor. It depends on Mn(2+) as a cofactor.

The enzyme catalyses NAD(+) + (deoxyribonucleotide)n-3'-hydroxyl + 5'-phospho-(deoxyribonucleotide)m = (deoxyribonucleotide)n+m + AMP + beta-nicotinamide D-nucleotide.. Its function is as follows. DNA ligase that catalyzes the formation of phosphodiester linkages between 5'-phosphoryl and 3'-hydroxyl groups in double-stranded DNA using NAD as a coenzyme and as the energy source for the reaction. It is essential for DNA replication and repair of damaged DNA. The polypeptide is DNA ligase (Synechococcus sp. (strain RCC307)).